The sequence spans 348 residues: Anthranilate phosphoribosyltransferase (348 aa).

5-phospho-alpha-D-ribose 1-diphosphate-binding positions include G89, 92–93 (GD), T97, 99–102 (NIST), 117–125 (KHGNRSASS), and S129. Position 89 (G89) interacts with anthranilate. S101 is a Mg(2+) binding site. Residue N120 participates in anthranilate binding. An anthranilate-binding site is contributed by R175. Mg(2+) contacts are provided by D234 and E235.

This sequence belongs to the anthranilate phosphoribosyltransferase family. As to quaternary structure, homodimer. Mg(2+) serves as cofactor.

It catalyses the reaction N-(5-phospho-beta-D-ribosyl)anthranilate + diphosphate = 5-phospho-alpha-D-ribose 1-diphosphate + anthranilate. The protein operates within amino-acid biosynthesis; L-tryptophan biosynthesis; L-tryptophan from chorismate: step 2/5. Its function is as follows. Catalyzes the transfer of the phosphoribosyl group of 5-phosphorylribose-1-pyrophosphate (PRPP) to anthranilate to yield N-(5'-phosphoribosyl)-anthranilate (PRA). The chain is Anthranilate phosphoribosyltransferase from Synechocystis sp. (strain ATCC 27184 / PCC 6803 / Kazusa).